A 634-amino-acid polypeptide reads, in one-letter code: Threonine--tRNA ligase (634 aa).

A TGS domain is found at Met-1–Thr-61. The interval Asp-241–Pro-532 is catalytic. The Zn(2+) site is built by Cys-332, His-383, and His-509.

The protein belongs to the class-II aminoacyl-tRNA synthetase family. As to quaternary structure, homodimer. Zn(2+) is required as a cofactor.

The protein resides in the cytoplasm. The catalysed reaction is tRNA(Thr) + L-threonine + ATP = L-threonyl-tRNA(Thr) + AMP + diphosphate + H(+). Functionally, catalyzes the attachment of threonine to tRNA(Thr) in a two-step reaction: L-threonine is first activated by ATP to form Thr-AMP and then transferred to the acceptor end of tRNA(Thr). Also edits incorrectly charged L-seryl-tRNA(Thr). The sequence is that of Threonine--tRNA ligase from Francisella tularensis subsp. holarctica (strain OSU18).